Here is a 373-residue protein sequence, read N- to C-terminus: Thyroid hormone receptor beta-A (373 aa).

The interval 1–18 (MPSSMSGYIPSYLDKDEL) is modulating. 2 consecutive NR C4-type zinc fingers follow at residues 19–39 (CVVCGDKATGYHYRCITCEGC) and 57–81 (CKYEGKCVIDKVTRNQCQECRFKKC). Residues 19–93 (CVVCGDKATG…VGMATDLVLD (75 aa)) constitute a DNA-binding region (nuclear receptor). In terms of domain architecture, NR LBD spans 129-373 (EEWELIQVVT…PPLFLEVFED (245 aa)).

Belongs to the nuclear hormone receptor family. NR1 subfamily.

The protein resides in the nucleus. Its function is as follows. High affinity receptor for triiodothyronine (T3). This Xenopus laevis (African clawed frog) protein is Thyroid hormone receptor beta-A (thrb-a).